Here is a 209-residue protein sequence, read N- to C-terminus: MIAIIDYGMGNIRSVEQALKYIGAEYIVTSNKKEILRSDGVILPGVGAFPKAMDVLEERDLVCVLKEVCDIGKPLLGICLGMQLLFERSEELKDCSGLGLLPGEIRKLKVSYKIPHMGWNELRKEREFPLWNGLVDGSFVYYVHSYYADCPDEIVCGVSDYGMQVPGFVAKGNVFGAQFHPEKSGEIGMQILKNFQGVVEAWKSSQLSI.

The 205-residue stretch at 1–205 (MIAIIDYGMG…QGVVEAWKSS (205 aa)) folds into the Glutamine amidotransferase type-1 domain. Residue Cys-79 is the Nucleophile of the active site. Catalysis depends on residues His-180 and Glu-182.

In terms of assembly, heterodimer of HisH and HisF.

It localises to the cytoplasm. It catalyses the reaction 5-[(5-phospho-1-deoxy-D-ribulos-1-ylimino)methylamino]-1-(5-phospho-beta-D-ribosyl)imidazole-4-carboxamide + L-glutamine = D-erythro-1-(imidazol-4-yl)glycerol 3-phosphate + 5-amino-1-(5-phospho-beta-D-ribosyl)imidazole-4-carboxamide + L-glutamate + H(+). The catalysed reaction is L-glutamine + H2O = L-glutamate + NH4(+). It functions in the pathway amino-acid biosynthesis; L-histidine biosynthesis; L-histidine from 5-phospho-alpha-D-ribose 1-diphosphate: step 5/9. In terms of biological role, IGPS catalyzes the conversion of PRFAR and glutamine to IGP, AICAR and glutamate. The HisH subunit catalyzes the hydrolysis of glutamine to glutamate and ammonia as part of the synthesis of IGP and AICAR. The resulting ammonia molecule is channeled to the active site of HisF. This is Imidazole glycerol phosphate synthase subunit HisH from Bacillus cereus (strain B4264).